The sequence spans 202 residues: MIVAGVDEVGRGCLFGPVWAAAVILKAEAFDRLPALGVTDSKALSAKRRQALLPEIHSHCLSYGLGQASAACIDAVGIRAATELAMCRALQRLCHSPDHVLVDGSLPLRPWPGSQETVVAGDSHCLAIACASILAKEGRDALLQRLDQRWPGYGLASHKGYGTKAHRTALLQWGPTPLHRLSFLAPELKGGSPAGASSGNLE.

Residues 1–195 form the RNase H type-2 domain; it reads MIVAGVDEVG…PELKGGSPAG (195 aa). Residues D7, E8, and D103 each contribute to the a divalent metal cation site.

It belongs to the RNase HII family. The cofactor is Mn(2+). Mg(2+) is required as a cofactor.

It is found in the cytoplasm. It carries out the reaction Endonucleolytic cleavage to 5'-phosphomonoester.. In terms of biological role, endonuclease that specifically degrades the RNA of RNA-DNA hybrids. This Synechococcus sp. (strain RCC307) protein is Ribonuclease HII.